We begin with the raw amino-acid sequence, 329 residues long: Peroxidase 51 (329 aa).

An N-terminal signal peptide occupies residues 1–25 (MVVMNKTNLLLLILSLFLAINLSSA). Cystine bridges form between cysteine 36/cysteine 119, cysteine 69/cysteine 74, cysteine 125/cysteine 325, and cysteine 204/cysteine 236. Histidine 67 functions as the Proton acceptor in the catalytic mechanism. Ca(2+) is bound by residues aspartate 68, valine 71, glycine 73, aspartate 75, and serine 77. Substrate is bound at residue proline 167. Histidine 197 lines the heme b pocket. Threonine 198 is a binding site for Ca(2+). Residue asparagine 215 is glycosylated (N-linked (GlcNAc...) asparagine). Residues aspartate 249, threonine 252, and aspartate 257 each coordinate Ca(2+).

This sequence belongs to the peroxidase family. Classical plant (class III) peroxidase subfamily. Requires heme b as cofactor. Ca(2+) serves as cofactor.

It localises to the secreted. It catalyses the reaction 2 a phenolic donor + H2O2 = 2 a phenolic radical donor + 2 H2O. In terms of biological role, removal of H(2)O(2), oxidation of toxic reductants, biosynthesis and degradation of lignin, suberization, auxin catabolism, response to environmental stresses such as wounding, pathogen attack and oxidative stress. These functions might be dependent on each isozyme/isoform in each plant tissue. The chain is Peroxidase 51 (PER51) from Arabidopsis thaliana (Mouse-ear cress).